The chain runs to 414 residues: Serine/threonine transporter SstT (414 aa).

Over 2-15 the chain is Cytoplasmic; it reads TTQRSPGLFRRLAH. A helical membrane pass occupies residues 16 to 36; sequence GSLVKQILVGLVLGILLAWIS. The Periplasmic segment spans residues 37 to 45; sequence KPAAEAVGL. Residues 46–66 form a helical membrane-spanning segment; that stretch reads LGTLFVGALKAVAPILVLMLV. Residues 67–83 lie on the Cytoplasmic side of the membrane; the sequence is MASIANHQHGQKTNILP. A helical transmembrane segment spans residues 84–104; it reads ILFLYLLGTFSAALAAVVFSF. Topologically, residues 105-142 are periplasmic; the sequence is AFPSTLHLSSSAGDISPPSGIVEVMRGLVMSMVSNPID. Residues 143-163 traverse the membrane as a helical segment; that stretch reads ALLKGNYIGILVWAIGLGFAL. Residues 164-179 are Cytoplasmic-facing; it reads RHGNETTKNLVNDMSN. A helical transmembrane segment spans residues 180 to 200; sequence AVTFMVKLVIRFAPIGIFGLV. At 201 to 217 the chain is on the periplasmic side; it reads SSTLATTGFSTLWGYAQ. The chain crosses the membrane as a helical span at residues 218–238; it reads LLVVLVGCMLLVALVVNPLLV. At 239–299 the chain is on the cytoplasmic side; it reads WWKIRRNPFP…VSIPLGATIN (61 aa). Residues 300-320 traverse the membrane as a helical segment; the sequence is MAGAAITITVLTLAAVNTLGI. Residues 321–331 are Periplasmic-facing; that stretch reads PVDLPTALLLS. Residues 332–352 traverse the membrane as a helical segment; that stretch reads VVASLCACGASGVAGGSLLLI. At 353–414 the chain is on the cytoplasmic side; the sequence is PLACNMFGIS…DRLANSALRN (62 aa).

It belongs to the dicarboxylate/amino acid:cation symporter (DAACS) (TC 2.A.23) family.

It is found in the cell inner membrane. It carries out the reaction L-serine(in) + Na(+)(in) = L-serine(out) + Na(+)(out). It catalyses the reaction L-threonine(in) + Na(+)(in) = L-threonine(out) + Na(+)(out). Its function is as follows. Involved in the import of serine and threonine into the cell, with the concomitant import of sodium (symport system). This Shigella dysenteriae serotype 1 (strain Sd197) protein is Serine/threonine transporter SstT.